The chain runs to 976 residues: Ephrin type-A receptor 1 (976 aa).

An N-terminal signal peptide occupies residues 1 to 25 (MERRWPLGLGLVLLLCAPLPPGARA). The Extracellular portion of the chain corresponds to 26–547 (KEVTLMDTSK…PVSRGLTGGE (522 aa)). In terms of domain architecture, Eph LBD spans 27 to 209 (EVTLMDTSKA…FYQRCPETLN (183 aa)). Fibronectin type-III domains are found at residues 332–445 (PPSA…MGHA) and 447–538 (SLSG…TSPP). N-linked (GlcNAc...) asparagine glycosylation is present at N414. A helical transmembrane segment spans residues 548–568 (IVAVIFGLLLGAALLLGILVF). At 569–976 (RSRRAQRQRQ…ILCSIQGFKD (408 aa)) the chain is on the cytoplasmic side. 2 positions are modified to phosphotyrosine; by autocatalysis: Y599 and Y605. The region spanning 624 to 884 (LMVDTVIGEG…KLQAHLEQLL (261 aa)) is the Protein kinase domain. Residues 630 to 638 (IGEGEFGEV) and K656 contribute to the ATP site. The active-site Proton acceptor is the D749. Y781 is subject to Phosphotyrosine; by autocatalysis. A phosphoserine mark is found at S906 and S910. The SAM domain occupies 913 to 976 (IPYRTVSEWL…ILCSIQGFKD (64 aa)). At Y930 the chain carries Phosphotyrosine; by autocatalysis. A PDZ-binding motif is present at residues 974–976 (FKD).

The protein belongs to the protein kinase superfamily. Tyr protein kinase family. Ephrin receptor subfamily. As to quaternary structure, homodimer. Forms a signaling complex with LCK; PTK2B/PYK2 and PI3-kinase upon activation by EFNA1; regulates T-lymphocytes migration. Interacts (via SAM domain) with ILK (via ANK repeats); stimulated by EFNA1 but independent of the kinase activity of EPHA1. Interacts (kinase activity-dependent) with PTK2/FAK1. Post-translationally, phosphorylated. Autophosphorylation is stimulated by its ligand EFNA1. In terms of processing, ubiquitinated. In terms of tissue distribution, overexpressed in several carcinomas.

It is found in the cell membrane. It catalyses the reaction L-tyrosyl-[protein] + ATP = O-phospho-L-tyrosyl-[protein] + ADP + H(+). Receptor tyrosine kinase which binds promiscuously membrane-bound ephrin-A family ligands residing on adjacent cells, leading to contact-dependent bidirectional signaling into neighboring cells. The signaling pathway downstream of the receptor is referred to as forward signaling while the signaling pathway downstream of the ephrin ligand is referred to as reverse signaling. Binds with a low affinity EFNA3 and EFNA4 and with a high affinity to EFNA1 which most probably constitutes its cognate/functional ligand. Upon activation by EFNA1 induces cell attachment to the extracellular matrix inhibiting cell spreading and motility through regulation of ILK and downstream RHOA and RAC. Also plays a role in angiogenesis and regulates cell proliferation. May play a role in apoptosis. The sequence is that of Ephrin type-A receptor 1 (EPHA1) from Homo sapiens (Human).